Reading from the N-terminus, the 386-residue chain is WD repeat-containing protein 89 (386 aa).

6 WD repeats span residues 21–65 (KEPT…VIRE), 68–106 (GYPG…GKPV), 111–155 (GYPS…QDLS), 167–207 (THSD…EDDA), 213–253 (NSVS…TDEP), and 318–357 (GHAA…KTFT).

This is WD repeat-containing protein 89 (WDR89) from Bos taurus (Bovine).